The primary structure comprises 538 residues: Chaperonin GroEL 2 (538 aa).

ATP-binding positions include 29-32 (TLGP), 86-90 (DGTTT), Gly412, 479-481 (NAA), and Asp495.

The protein belongs to the chaperonin (HSP60) family. As to quaternary structure, forms a cylinder of 14 subunits composed of two heptameric rings stacked back-to-back. Interacts with the co-chaperonin GroES.

It is found in the cytoplasm. It carries out the reaction ATP + H2O + a folded polypeptide = ADP + phosphate + an unfolded polypeptide.. In terms of biological role, together with its co-chaperonin GroES, plays an essential role in assisting protein folding. The GroEL-GroES system forms a nano-cage that allows encapsulation of the non-native substrate proteins and provides a physical environment optimized to promote and accelerate protein folding. In Renibacterium salmoninarum (strain ATCC 33209 / DSM 20767 / JCM 11484 / NBRC 15589 / NCIMB 2235), this protein is Chaperonin GroEL 2.